The chain runs to 434 residues: MGLARALRRLSGALEPGNSRAGDEEEAGAGLCRNGWAPGPVAGNRRRGRFVKKDGHCNVRFVNLGGQGARYLSDLFTTCVDVRWRWMCLLFSCSFLASWLLFGLTFWLIASLHGDLAAPPPPAPCFSQVASFLAAFLFALETQTSIGYGVRSVTEECPAAVAAVVLQCIAGCVLDAFVVGAVMAKMAKPKKRNETLVFSENAVVALRDRRLCLMWRVGNLRRSHLVEAHVRAQLLQPRVTPEGEYIPLDHQDVDVGFDGGTDRIFLVSPITIVHEIDSASPLYELGRAELARADFELVVILEGMVEATAMTTQCRSSYLPGELLWGHRFEPVLFQRGSQYEVDYRHFHRTYEVPGTPVCSAKELDERAEQASHSPKSSFPGSLAAFCYENELALSCCQEEDEEEDTKEGTSAETPDRAASPQALTPTLALTLPP.

Residues 1–81 (MGLARALRRL…LSDLFTTCVD (81 aa)) are Cytoplasmic-facing. An S-nitrosocysteine modification is found at Cys79. Residues 82–108 (VRWRWMCLLFSCSFLASWLLFGLTFWL) form a helical membrane-spanning segment. Residues 109 to 131 (IASLHGDLAAPPPPAPCFSQVAS) are Extracellular-facing. The helical; Pore-forming intramembrane region spans 132-148 (FLAAFLFALETQTSIGY). Positions 145 to 150 (SIGYGV) match the Selectivity filter motif. Residues 149–157 (GVRSVTEEC) are Extracellular-facing. Residues 158–185 (PAAVAAVVLQCIAGCVLDAFVVGAVMAK) form a helical membrane-spanning segment. Residues 186-434 (MAKPKKRNET…TPTLALTLPP (249 aa)) are Cytoplasmic-facing. The segment at 398-434 (QEEDEEEDTKEGTSAETPDRAASPQALTPTLALTLPP) is disordered. Residues 407-416 (KEGTSAETPD) show a composition bias toward basic and acidic residues. Residues 418 to 434 (AASPQALTPTLALTLPP) show a composition bias toward low complexity.

The protein belongs to the inward rectifier-type potassium channel (TC 1.A.2.1) family. KCNJ14 subfamily. As to expression, expressed predominantly in motoneurons of cranial nerve motor nuclei within the general somatic and special visceral motor cell column.

Its subcellular location is the membrane. The enzyme catalyses K(+)(in) = K(+)(out). With respect to regulation, channel activity is regulated by variations of cytosolic pH; channels are activated by alkaline and inhibited by acidic pH values. Inhibited by Ba(2+) and Cs(+) in a voltage-dependent manner; sensitivity to those inhibitors is lower than in other Kir channels. In terms of biological role, inward rectifier potassium channels are characterized by a greater tendency to allow potassium to flow into the cell rather than out of it. Their voltage dependence is regulated by the concentration of extracellular potassium; as external potassium is raised, the voltage range of the channel opening shifts to more positive voltages. The protein is ATP-sensitive inward rectifier potassium channel 14 (Kcnj14) of Rattus norvegicus (Rat).